The chain runs to 883 residues: Histidine--tRNA ligase, cytoplasmic (883 aa).

Belongs to the class-II aminoacyl-tRNA synthetase family.

It is found in the cytoplasm. The protein resides in the cytosol. The enzyme catalyses tRNA(His) + L-histidine + ATP = L-histidyl-tRNA(His) + AMP + diphosphate + H(+). The chain is Histidine--tRNA ligase, cytoplasmic from Arabidopsis thaliana (Mouse-ear cress).